Reading from the N-terminus, the 91-residue chain is Small ribosomal subunit protein uS19 (91 aa).

Belongs to the universal ribosomal protein uS19 family.

Protein S19 forms a complex with S13 that binds strongly to the 16S ribosomal RNA. The protein is Small ribosomal subunit protein uS19 of Prochlorococcus marinus (strain MIT 9515).